The primary structure comprises 96 residues: Co-chaperonin GroES (96 aa).

Belongs to the GroES chaperonin family. In terms of assembly, heptamer of 7 subunits arranged in a ring. Interacts with the chaperonin GroEL.

The protein resides in the cytoplasm. Functionally, together with the chaperonin GroEL, plays an essential role in assisting protein folding. The GroEL-GroES system forms a nano-cage that allows encapsulation of the non-native substrate proteins and provides a physical environment optimized to promote and accelerate protein folding. GroES binds to the apical surface of the GroEL ring, thereby capping the opening of the GroEL channel. This is Co-chaperonin GroES from Polynucleobacter necessarius subsp. necessarius (strain STIR1).